The primary structure comprises 68 residues: Metallothionein-3 (68 aa).

Met1 is modified (N-acetylmethionine). Residues 1 to 30 (MDPETCPCPSGGSCTCADSCKCEGCKCTSC) are beta. A divalent metal cation is bound by residues Cys6, Cys8, Cys14, Cys16, Cys20, Cys22, Cys25, Cys27, and Cys30. The tract at residues 31–68 (KKSCCSCCPAECEKCAKDCVCKGGEGAEAEAEKCSCCE) is alpha. The residue at position 33 (Ser33) is a Phosphoserine. Cys34, Cys35, Cys37, Cys38, Cys42, Cys45, Cys49, Cys51, Cys64, Cys66, and Cys67 together coordinate a divalent metal cation.

It belongs to the metallothionein superfamily. Type 1 family.

In terms of biological role, binds heavy metals. Contains five zinc and one copper atoms per polypeptide chain and only a negligible amount of cadmium. The chain is Metallothionein-3 (MT3) from Macaca fascicularis (Crab-eating macaque).